Here is an 83-residue protein sequence, read N- to C-terminus: Exodeoxyribonuclease 7 small subunit (83 aa).

The protein belongs to the XseB family. As to quaternary structure, heterooligomer composed of large and small subunits.

The protein localises to the cytoplasm. It carries out the reaction Exonucleolytic cleavage in either 5'- to 3'- or 3'- to 5'-direction to yield nucleoside 5'-phosphates.. Bidirectionally degrades single-stranded DNA into large acid-insoluble oligonucleotides, which are then degraded further into small acid-soluble oligonucleotides. The sequence is that of Exodeoxyribonuclease 7 small subunit from Mesorhizobium japonicum (strain LMG 29417 / CECT 9101 / MAFF 303099) (Mesorhizobium loti (strain MAFF 303099)).